Consider the following 116-residue polypeptide: NADH-ubiquinone oxidoreductase chain 3 (116 aa).

A run of 3 helical transmembrane segments spans residues 3-23, 56-76, and 85-105; these read LITT…TISF, FFLI…LLPL, and PALT…GLIY.

It belongs to the complex I subunit 3 family.

The protein resides in the mitochondrion membrane. The enzyme catalyses a ubiquinone + NADH + 5 H(+)(in) = a ubiquinol + NAD(+) + 4 H(+)(out). In terms of biological role, core subunit of the mitochondrial membrane respiratory chain NADH dehydrogenase (Complex I) that is believed to belong to the minimal assembly required for catalysis. Complex I functions in the transfer of electrons from NADH to the respiratory chain. The immediate electron acceptor for the enzyme is believed to be ubiquinone. This Salmo salar (Atlantic salmon) protein is NADH-ubiquinone oxidoreductase chain 3 (MT-ND3).